The sequence spans 181 residues: Ribosome maturation factor RimM (181 aa).

A PRC barrel domain is found at 98-177; the sequence is EGEFFYCDLV…KITTHNAKTL (80 aa).

It belongs to the RimM family. In terms of assembly, binds ribosomal protein uS19.

It localises to the cytoplasm. In terms of biological role, an accessory protein needed during the final step in the assembly of 30S ribosomal subunit, possibly for assembly of the head region. Essential for efficient processing of 16S rRNA. May be needed both before and after RbfA during the maturation of 16S rRNA. It has affinity for free ribosomal 30S subunits but not for 70S ribosomes. The protein is Ribosome maturation factor RimM of Helicobacter pylori (strain HPAG1).